Consider the following 914-residue polypeptide: Protein translocase subunit SecA (914 aa).

ATP-binding positions include Gln-87, 105 to 109, and Asp-508; that span reads GEGKT. Cys-898, Cys-900, Cys-909, and His-910 together coordinate Zn(2+).

It belongs to the SecA family. As to quaternary structure, monomer and homodimer. Part of the essential Sec protein translocation apparatus which comprises SecA, SecYEG and auxiliary proteins SecDF-YajC and YidC. Requires Zn(2+) as cofactor.

Its subcellular location is the cell inner membrane. It is found in the cytoplasm. It catalyses the reaction ATP + H2O + cellular proteinSide 1 = ADP + phosphate + cellular proteinSide 2.. Part of the Sec protein translocase complex. Interacts with the SecYEG preprotein conducting channel. Has a central role in coupling the hydrolysis of ATP to the transfer of proteins into and across the cell membrane, serving both as a receptor for the preprotein-SecB complex and as an ATP-driven molecular motor driving the stepwise translocation of polypeptide chains across the membrane. The polypeptide is Protein translocase subunit SecA (Xylella fastidiosa (strain 9a5c)).